We begin with the raw amino-acid sequence, 413 residues long: Monacolin J acid methylbutanoyltransferase (413 aa).

Residue Arg-73 participates in monacolin J binding. Ser-76 (acyl-ester intermediate) is an active-site residue. Residues Arg-173, Tyr-188, and Tyr-258 each contribute to the monacolin J site. Gly-366 is a 2-methylbutanoate binding site. Positions 388 and 390 each coordinate monacolin J.

This sequence belongs to the class-A beta-lactamase family. Interacts with LovF.

It catalyses the reaction monacolin J carboxylate + (S)-2-methylbutanoyl-[2-methylbutanoate polyketide synthase] = lovastatin carboxylate + holo-[2-methylbutanoate polyketide synthase]. It functions in the pathway polyketide biosynthesis; lovastatin biosynthesis. In terms of biological role, monacolin J acid methylbutanoyltransferase; part of the gene cluster that mediates the biosynthesis of lovastatin (also known as mevinolin, mevacor or monacolin K), a hypolipidemic inhibitor of (3S)-hydroxymethylglutaryl-coenzyme A (HMG-CoA) reductase (HMGR). The first step in the biosynthesis of lovastatin is the production of dihydromonacolin L acid by the lovastatin nonaketide synthase lovB and the trans-acting enoyl reductase lovC via condensation of one acetyl-CoA unit and 8 malonyl-CoA units. Dihydromonacolin L acid is released from lovB by the thioesterase lovG. Next, dihydromonacolin L acid is oxidized by the dihydromonacolin L monooxygenase lovA twice to form monacolin J acid. The 2-methylbutyrate moiety of lovastatin is synthesized by the lovastatin diketide synthase lovF via condensation of one acetyl-CoA unit and one malonyl-CoA unit. Finally, the covalent attachment of this moiety to monacolin J acid is catalyzed by the transesterase lovD to yield lovastatin. LovD has broad substrate specificity and can also convert monacolin J to simvastatin using alpha-dimethylbutanoyl-S-methyl-3-mercaptopropionate (DMB-S-MMP) as the thioester acyl donor, and can also catalyze the reverse reaction and function as hydrolase in vitro. LovD has much higher activity with LovF-bound 2-methylbutanoate than with free diketide substrates. The sequence is that of Monacolin J acid methylbutanoyltransferase from Aspergillus terreus (strain NIH 2624 / FGSC A1156).